The following is a 423-amino-acid chain: GTPase HflX (423 aa).

One can recognise a Hflx-type G domain in the interval 202 to 366; it reads PAAAIVGYTN…LLETILRNQK (165 aa). Residues 208–215, 233–237, 255–258, 321–324, and 344–346 each bind GTP; these read GYTNAGKS, FATLD, DTVG, NKID, and SAK. The Mg(2+) site is built by Ser-215 and Thr-235.

Belongs to the TRAFAC class OBG-HflX-like GTPase superfamily. HflX GTPase family. Monomer. Associates with the 50S ribosomal subunit. Mg(2+) serves as cofactor.

It is found in the cytoplasm. Its function is as follows. GTPase that associates with the 50S ribosomal subunit and may have a role during protein synthesis or ribosome biogenesis. This is GTPase HflX from Lacrimispora saccharolytica (strain ATCC 35040 / DSM 2544 / NRCC 2533 / WM1) (Clostridium saccharolyticum).